The chain runs to 652 residues: MNKRMNELVALLNRYATEYYTSDNPSVSDSEYDRLYRELVELETAYPEQVLADSPTHRVGGKVLDGFEKYSHQYPLYSLQDAFSREELDAFDARVRKEVAHPTYICELKIDGLSISLTYEKGILVAGVTRGDGSIGENITENLKRVKDIPLTLPEELDITVRGECYMPRASFDQVNQVRQENGEPEFANPRNAAAGTLRQLDTAVVAKRNLATFLYQEASPSTRDSQEKGLKYLEQLGFVVNPKRILAENIDEIWNFIQEVGQERENLPYDIDGVVIKVNDLVSQEELGFTVKAPKWAVAYKFPAEEKEAQLLSVDWTVGRTGVVTPTANLTPVQLAGTTVSRATLHNVDYIAEKDIRKDDTVIVYKAGDIIPAVLRVVESKRVSEEKLDIPTNCPSCNSDLLHFEDEVALRCINPRCPAQIMEGLIHFASRDAMNITGLGPSIVEKLFAANLVKDVADIYRLQEEDFLLLEGVKEKSAAKLYQAIQASKENSAEKLLFGLGIRHVGSKASQLLLQYFHSIENLSQADSEEVASIESLGGVIAKSLQTYFAAEGSEILLRELKETGVNLDYKGQTVVADAALSGLTVVLTGKLERLKRSEAKSKLESLGAKVTGSVSKKTDLVVVGADAGSKLQKAQELGIQVRDEAWLESL.

Residues 29 to 33 (DSEYD), 78 to 79 (SL), and Glu-107 contribute to the NAD(+) site. Lys-109 functions as the N6-AMP-lysine intermediate in the catalytic mechanism. Positions 130, 164, 278, and 302 each coordinate NAD(+). The Zn(2+) site is built by Cys-395, Cys-398, Cys-413, and Cys-418. One can recognise a BRCT domain in the interval 577–652 (VADAALSGLT…VRDEAWLESL (76 aa)).

The protein belongs to the NAD-dependent DNA ligase family. LigA subfamily. Requires Mg(2+) as cofactor. It depends on Mn(2+) as a cofactor.

The catalysed reaction is NAD(+) + (deoxyribonucleotide)n-3'-hydroxyl + 5'-phospho-(deoxyribonucleotide)m = (deoxyribonucleotide)n+m + AMP + beta-nicotinamide D-nucleotide.. Its function is as follows. DNA ligase that catalyzes the formation of phosphodiester linkages between 5'-phosphoryl and 3'-hydroxyl groups in double-stranded DNA using NAD as a coenzyme and as the energy source for the reaction. It is essential for DNA replication and repair of damaged DNA. This Streptococcus pneumoniae (strain Hungary19A-6) protein is DNA ligase.